We begin with the raw amino-acid sequence, 736 residues long: Catalase-peroxidase (736 aa).

The segment at 1–21 is disordered; sequence MSNEQKCPFSGTHGARTTVGT. The tryptophyl-tyrosyl-methioninium (Trp-Tyr) (with M-250) cross-link spans 96–224; sequence WHSAGTYRTG…LAAVQMGLIY (129 aa). Histidine 97 functions as the Proton acceptor in the catalytic mechanism. Positions 224-250 form a cross-link, tryptophyl-tyrosyl-methioninium (Tyr-Met) (with W-96); that stretch reads YVNPEGPDGNPDPVASGRDIRETFARM. Heme b is bound at residue histidine 265.

The protein belongs to the peroxidase family. Peroxidase/catalase subfamily. In terms of assembly, homodimer or homotetramer. The cofactor is heme b. Post-translationally, formation of the three residue Trp-Tyr-Met cross-link is important for the catalase, but not the peroxidase activity of the enzyme.

It catalyses the reaction H2O2 + AH2 = A + 2 H2O. The enzyme catalyses 2 H2O2 = O2 + 2 H2O. In terms of biological role, bifunctional enzyme with both catalase and broad-spectrum peroxidase activity. In Dechloromonas aromatica (strain RCB), this protein is Catalase-peroxidase.